A 681-amino-acid polypeptide reads, in one-letter code: Secretion system apparatus protein SsaV (681 aa).

7 helical membrane passes run 24-44 (MVLA…LPTW), 48-68 (ILIT…IYLS), 73-93 (LSVF…LTIS), 118-138 (GNLT…FIVI), 206-226 (TIAG…IAIV), 244-264 (IGDG…AGII), and 295-315 (AVVL…LAFF).

This sequence belongs to the FHIPEP (flagella/HR/invasion proteins export pore) family.

The protein resides in the cell inner membrane. Its function is as follows. Component of Salmonella pathogenicity island 2 (SPI-2) type III secretion system, required for secretion of some type III-secreted effectors including the SpvB exotoxin. The sequence is that of Secretion system apparatus protein SsaV (ssaV) from Salmonella typhimurium (strain 14028s / SGSC 2262).